The chain runs to 475 residues: NADH-quinone oxidoreductase subunit N (475 aa).

The next 14 helical transmembrane spans lie at 7-27 (ISIAAPEALLIGVALIGVLLG), 40-60 (LLGALALAGAAFLAASQSAVD), 74-94 (FIAIAKAVSYGVGAIALLVAG), 105-125 (FEYTLLVMFGSAGMGVMLSAN), 127-147 (LMTLYMGIETLSLSSYVLAAF), 161-181 (YFVLGALASGLLLFGCSLVYG), 191-211 (IAAADQSIGLTFGLVLILMAL), 242-262 (APKLATVAVLANIMFTVFGVY), 266-286 (WMLIIAIVSAISMLVGAFGGL), 295-315 (LAYSSIANVGYALMGVAAGEV), 321-341 (VLTYMTIYVITTLGMFGIVLA), 365-385 (LAVAMTVLVFSVAGIPPMAGF), 399-419 (ELYWLVAVGVIGSVVSLGYYL), and 448-468 (GATILAFPVLVIWIGWMTGII).

This sequence belongs to the complex I subunit 2 family. NDH-1 is composed of 14 different subunits. Subunits NuoA, H, J, K, L, M, N constitute the membrane sector of the complex.

The protein resides in the cell inner membrane. It carries out the reaction a quinone + NADH + 5 H(+)(in) = a quinol + NAD(+) + 4 H(+)(out). NDH-1 shuttles electrons from NADH, via FMN and iron-sulfur (Fe-S) centers, to quinones in the respiratory chain. The immediate electron acceptor for the enzyme in this species is believed to be ubiquinone. Couples the redox reaction to proton translocation (for every two electrons transferred, four hydrogen ions are translocated across the cytoplasmic membrane), and thus conserves the redox energy in a proton gradient. In Hirschia baltica (strain ATCC 49814 / DSM 5838 / IFAM 1418), this protein is NADH-quinone oxidoreductase subunit N.